Consider the following 70-residue polypeptide: Probable protein transport protein Sec61 subunit gamma (70 aa).

Over 1–33 (MADNADDLFQIPKNFYKEGSHFIKRCVKPDRKE) the chain is Cytoplasmic. Residues 34 to 62 (FLSISKAVATGFVLMGLIGYIIKLIHIPI) traverse the membrane as a helical segment. Residues 63 to 70 (NKVLVGGA) are Extracellular-facing.

The protein belongs to the SecE/SEC61-gamma family. In terms of assembly, heterotrimeric complex composed of SEC61-alpha, SEC61-beta and SEC61-gamma.

It localises to the endoplasmic reticulum membrane. Its function is as follows. Necessary for protein translocation in the endoplasmic reticulum. This is Probable protein transport protein Sec61 subunit gamma (sss1) from Schizosaccharomyces pombe (strain 972 / ATCC 24843) (Fission yeast).